Consider the following 358-residue polypeptide: DNA integrity scanning protein DisA (358 aa).

One can recognise a DAC domain in the interval 9 to 147 (KQDLSEILQF…ENMKYILKDI (139 aa)). ATP contacts are provided by residues Gly-76, Leu-94, and 107–111 (MRHRT).

The protein belongs to the DisA family. Homooctamer. Mg(2+) is required as a cofactor.

The catalysed reaction is 2 ATP = 3',3'-c-di-AMP + 2 diphosphate. Its function is as follows. Participates in a DNA-damage check-point that is active prior to asymmetric division when DNA is damaged. DisA forms globular foci that rapidly scan along the chromosomes during sporulation, searching for lesions. When a lesion is present, DisA pauses at the lesion site. This triggers a cellular response that culminates in a temporary block in sporulation initiation. In terms of biological role, also has diadenylate cyclase activity, catalyzing the condensation of 2 ATP molecules into cyclic di-AMP (c-di-AMP). c-di-AMP acts as a signaling molecule that couples DNA integrity with progression of sporulation. The rise in c-di-AMP level generated by DisA while scanning the chromosome, operates as a positive signal that advances sporulation; upon encountering a lesion, the DisA focus arrests at the damaged site and halts c-di-AMP synthesis. The protein is DNA integrity scanning protein DisA of Bacillus licheniformis (strain ATCC 14580 / DSM 13 / JCM 2505 / CCUG 7422 / NBRC 12200 / NCIMB 9375 / NCTC 10341 / NRRL NRS-1264 / Gibson 46).